The primary structure comprises 378 residues: REST corepressor 3 (378 aa).

Positions 1 to 83 (MRVGAEYQAR…KSLADLPNFT (83 aa)) constitute an ELM2 domain. The region spanning 84-135 (PFPDEWTVEDKVLFEQAFSFHGKSFHRIQQMLPDKTIASLVKYYYSWKKTRS) is the SANT domain. Residues 147 to 219 (LANRNNQGDS…SQRSKCRPPK (73 aa)) form a disordered region. A compositionally biased stretch (basic and acidic residues) spans 162–184 (EPHPMDGNDSDYDPKKEAKKEGN). Basic residues predominate over residues 205 to 217 (QHRHHSQRSKCRP). Residues 238–273 (ANTILRRLDMELISLKRQVQNAKQVNSALKQKMEGG) are a coiled coil. Residues 337–356 (TASSTSCCSCSPPSASAAPT) are disordered.

It belongs to the CoREST family.

Its subcellular location is the nucleus. Functionally, may act as a component of a corepressor complex that represses transcription. The polypeptide is REST corepressor 3 (RCOR3) (Gallus gallus (Chicken)).